A 2303-amino-acid polypeptide reads, in one-letter code: Genome polyprotein (2303 aa).

Residues 3–14 (CKHGYPDVCPIC) fold into a zinc finger. Positions 30 to 46 (DGEWFPTDLLCVDLDDD) are acidic. A theilo region spans residues 60 to 73 (MEWTDVPLVCDTVM). A disordered region spans residues 73–93 (MEPQGNASSSDKSNSQSSGNE). Gly77 is lipidated: N-myristoyl glycine; by host. A compositionally biased stretch (low complexity) spans 80–90 (SSSDKSNSQSS). The cysteines at positions 501 and 503 are disulfide-linked. The interval 1041-1047 (YYKQRLI) is host EIF4E binding. Residues 1283–1448 (IPLASLCEKF…CKTPAGMLDI (166 aa)) enclose the SF3 helicase domain. Position 1312–1319 (1312–1319 (GAAGQGKS)) interacts with ATP. Tyr1608 carries the O-(5'-phospho-RNA)-tyrosine modification. Positions 1636–1829 (NPVMDFELFC…AATIITRELI (194 aa)) constitute a Peptidase C3 domain. Residues His1680, Asp1714, and Cys1793 each act as for protease 3C activity in the active site. One can recognise a RdRp catalytic domain in the interval 2071–2189 (NYVYDVDYSN…GTNYQIDFNL (119 aa)). Catalysis depends on for RdRp activity residues Asp2077 and Asp2175.

It belongs to the picornaviruses polyprotein family. In terms of assembly, interacts with host EIF4E. Interacts with the leader protein. Interacts with host RAN; the complex L-RAN recruits cellular kinases responsible for the L-induced nucleocytoplasmic trafficking inhibition. The complex L-RAN can further bind to the host exportins XPO1/CRM1 and CSE1L/CAS. Interacts with the protein 2A. Interacts with host RNASEL; this interaction prevents RNASEL activation by its substrate 2'-5' oligoadenylates. Phosphorylated. Post-translationally, specific enzymatic cleavages by the viral protease in vivo yield a variety of precursors and mature proteins. The polyprotein seems to be cotranslationally cleaved at the 2A/2B junction by a ribosomal skip from one codon to the next without formation of a peptide bond. This process would release the P1-2A peptide from the translational complex. In terms of processing, during virion maturation, immature virions are rendered infectious following cleavage of VP0 into VP4 and VP2. This maturation seems to be an autocatalytic event triggered by the presence of RNA in the capsid and is followed by a conformational change of the particle. Uridylylated by the polymerase and is covalently linked to the 5'-end of genomic RNA. This uridylylated form acts as a nucleotide-peptide primer for the polymerase. Post-translationally, myristoylation is required during RNA encapsidation and formation of the mature virus particle.

Its subcellular location is the virion. It localises to the host cytoplasm. It is found in the host nucleus. The protein resides in the host nucleolus. The protein localises to the host cytoplasmic vesicle membrane. It catalyses the reaction RNA(n) + a ribonucleoside 5'-triphosphate = RNA(n+1) + diphosphate. The enzyme catalyses ATP + H2O = ADP + phosphate + H(+). The catalysed reaction is Selective cleavage of Gln-|-Gly bond in the poliovirus polyprotein. In other picornavirus reactions Glu may be substituted for Gln, and Ser or Thr for Gly.. Its function is as follows. Forms a complex with host RAN and probably binds to exportins carrying activated MAPK in order to mediate the hyperphosphorylation of host Phe/Gly containing nuclear pore proteins (Nups) resulting in cessation of active nucleocytoplasmic transport. Proteins with NLS signals fail to import, cellular mRNAs fail to export, and some proteins small enough for diffusion are not retained anymore (efflux). The resulting inhibition of cellular protein synthesis serves to ensure maximal viral gene expression and to evade host immune response. The leader protein also inhibits host interferon regulatory factor 3 (IRF3) dimerization, thereby blocking the transcriptional activation of IFN genes. Binds to host RNase L thereby preventing its activation by 2'-5' oligoadenylates in order to counteract the antiviral interferon-inducible OAS/RNase L pathway. Inhibits the integrated stress response (ISR) in the infected cell. Inhibits the host EIF2AK2/PKR by rendering this kinase unable to detect double-stranded RNA. Also impairs host stress granule formation probably by acting on a step downstream of EIF2AK2/PKR activation. Functionally, forms an icosahedral capsid of pseudo T=3 symmetry with capsid proteins VP2 and VP3. Together they form an icosahedral capsid composed of 60 copies of each VP1, VP2, and VP3, with a diameter of approximately 300 Angstroms. VP4 lies on the inner surface of the protein shell formed by VP1, VP2 and VP3. All the three latter proteins contain a beta-sheet structure called beta-barrel jelly roll. VP1 is situated at the 12 fivefold axes, whereas VP2 and VP3 are located at the quasi-sixfold axes. Lies on the inner surface of the capsid shell. After binding to the host receptor, the capsid undergoes conformational changes. Capsid protein VP4 is released, capsid protein VP1 N-terminus is externalized, and together, they shape a pore in the host membrane through which the viral genome is translocated into the host cell cytoplasm. After genome has been released, the channel shrinks. In terms of biological role, VP0 precursor is a component of immature procapsids. Its function is as follows. Involved in host translation shutoff by inhibiting cap-dependent mRNA translation. Nuclear localization is required for this function. The resulting inhibition of cellular protein synthesis serves to ensure maximal viral gene expression and to evade host immune response. Inhibits the phosphorylation of the leader protein. Binds to the RNA stem-loop essential for the ribosomal frameshift event and trans-activates the production of protein 2B*. Functionally, affects membrane integrity and causes an increase in membrane permeability. Associates with and induces structural rearrangements of intracellular membranes. It displays RNA-binding, nucleotide binding and NTPase activities. In terms of biological role, serves as membrane anchor via its hydrophobic domain. Its function is as follows. Forms a primer, VPg-pU, which is utilized by the polymerase for the initiation of RNA chains. Functionally, cysteine protease that generates mature viral proteins from the precursor polyprotein. In addition to its proteolytic activity, it binds to viral RNA, and thus influences viral genome replication. RNA and substrate cooperatively bind to the protease. Cleaves host PABP1, this cleavage is important for viral replication. Replicates the genomic and antigenomic RNAs by recognizing replications specific signals. Performs VPg uridylylation. This Mus musculus (Mouse) protein is Genome polyprotein.